The chain runs to 264 residues: uncharacterized protein (264 aa).

Composition is skewed to polar residues over residues 1–18 (MFEN…SSRS), 73–83 (SLGSVGTTEVN), and 126–139 (KTTQ…QPVL). 2 disordered regions span residues 1–47 (MFEN…WVGS) and 68–264 (RKEP…LSFE). Residues 149–171 (SSGQPQVSSSAQPSPADASQPEA) are compositionally biased toward low complexity. The segment covering 194–212 (LIHKDGQDDPKLKVTECRR) has biased composition (basic and acidic residues). Residues Ser214, Ser215, Ser241, and Ser250 each carry the phosphoserine modification.

This is an uncharacterized protein from Bos taurus (Bovine).